The following is a 327-amino-acid chain: G protein pathway suppressor 2 (327 aa).

A coiled-coil region spans residues 14–109 (MARALHRHIM…RRRKEQSDLT (96 aa)). The interval 26–65 (RERKRQEEEEVDKMMEQKMKEEQERRKKKEMEERMSLEET) is disordered. Residues Lys45 and Lys71 each participate in a glycyl lysine isopeptide (Lys-Gly) (interchain with G-Cter in SUMO1) cross-link. The segment at 61–94 (SLEETKEQILKLQEKLSALQEEKHQLFLQLKKVL) is interaction with SUMO. Disordered stretches follow at residues 178–208 (GQFQGSPGGAYGTAQPPPHYGPTQPAYSPSQ), 253–285 (QKQMEHANQQTSFSDSSSLRPMHPQALHPAPGL), and 300–327 (KSGFATTSQPGPRLPFIQHSQNPRFYHK). A compositionally biased stretch (polar residues) spans 253 to 271 (QKQMEHANQQTSFSDSSSL). Position 312 is an asymmetric dimethylarginine (Arg312). Positions 317–327 (QHSQNPRFYHK) are enriched in polar residues. Arg323 is subject to Asymmetric dimethylarginine; alternate. An Omega-N-methylarginine; alternate modification is found at Arg323.

As to quaternary structure, component of the N-Cor repressor complex, at least composed of NCOR1, NCOR2, HDAC3, TBL1X, TBL1R, CORO2A and GPS2. Interacts (when sumoylated at Lys-71) with TBL1X; leading to protect GPS2 from degradation by the proteasome. Interacts with UBE2N; leading to inhibit UBE2N/Ubc13 activity. Interacts with TRAF1. Interacts with TRAF2. Interacts with TRAF6. Interacts with PPARG (when in the liganded conformation). Interacts with (sumoylated) NR1H2; interaction with sumoylated NR1H2 and NR5A2 onto hepatic acute phase protein promoters prevents N-Cor corepressor complex dissociation. Interacts with (sumoylated) NR5A2; interaction with sumoylated NR1H2 and NR5A2 onto hepatic acute phase protein promoters prevents N-Cor corepressor complex dissociation. Interacts with NR1H3. Interacts with RFX4. Interacts with ANKRD26. In terms of processing, sumoylation regulates its subcellular location. Sumoylation at Lys-45 and Lys-71 regulates the shuttling between the cytoplasm and the nucleus. Sumoylation at Lys-71 is required for interaction with TBL1X. Sumoylated at Lys-45 and Lys-71 in mitochondrion. Desumoylation by SENP1 leads to relocation from the mitochondria to the nucleus. Ubiquitinated at the C-terminus by SIAH2; leading to its degradation by the proteasome. Interaction with TBL1X and methylation at Arg-323 protect GPS2 against ubiquitination and degradation. Post-translationally, methylated at Arg-312 and Arg-323 by PRMT6. Methylation at Arg-323 protects from degradation by the proteasome.

The protein localises to the nucleus. The protein resides in the mitochondrion. Its subcellular location is the cytoplasm. It is found in the cytosol. In terms of biological role, key regulator of inflammation, lipid metabolism and mitochondrion homeostasis that acts by inhibiting the activity of the ubiquitin-conjugating enzyme UBE2N/Ubc13, thereby inhibiting 'Lys-63'-linked ubiquitination. In the nucleus, can both acts as a corepressor and coactivator of transcription, depending on the context. Acts as a transcription coactivator in adipocytes by promoting the recruitment of PPARG to promoters: acts by inhibiting the activity of the ubiquitin-conjugating enzyme UBE2N/Ubc13, leading to stabilization of KDM4A and subsequent histone H3 'Lys-9' (H3K9) demethylation. Promotes cholesterol efflux by acting as a transcription coactivator. Acts as a regulator of B-cell development by inhibiting UBE2N/Ubc13, thereby restricting the activation of Toll-like receptors (TLRs) and B-cell antigen receptors (BCRs) signaling pathways. Acts as a key mediator of mitochondrial stress response: in response to mitochondrial depolarization, relocates from the mitochondria to the nucleus following desumoylation and specifically promotes expression of nuclear-encoded mitochondrial genes. Promotes transcription of nuclear-encoded mitochondrial genes by inhibiting UBE2N/Ubc13. Can also act as a corepressor as part of the N-Cor repressor complex by repressing active PPARG. Plays an anti-inflammatory role in macrophages and is required for insulin sensitivity by acting as a corepressor. Plays an anti-inflammatory role during the hepatic acute phase response by interacting with sumoylated NR1H2 and NR5A2 proteins, thereby preventing N-Cor corepressor complex dissociation. In the cytosol, also plays a non-transcriptional role by regulating insulin signaling and pro-inflammatory pathways. In the cytoplasm, acts as a negative regulator of inflammation by inhibiting the pro-inflammatory TNF-alpha pathway; acts by repressing UBE2N/Ubc13 activity. In the cytoplasm of adipocytes, restricts the activation of insulin signaling via inhibition of UBE2N/Ubc13-mediated ubiquitination of AKT. Able to suppress G-protein- and mitogen-activated protein kinase-mediated signal transduction. The chain is G protein pathway suppressor 2 from Mus musculus (Mouse).